The chain runs to 290 residues: MPFDFRRFDIYRKVPKDLTQPTYTGAIISICCCLFILFLFLSELTGFITTEVVNELYVDDPDKDSGGKIDVSLNISLPNLHCELVGLDIQDEMGRHEVGHIDNSMKIPLNNGAGCRFEGQFSINKVPGNFHVSTHSATAQPQNPDMTHVIHKLSFGDTLQVQNIHGAFNALGGADRLTSNPLASHDYILKIVPTVYEDKSGKQRYSYQYTVANKEYVAYSHTGRIIPAIWFRYDLSPITVKYTERRQPLYRFITTICAIIGGTFTVAGILDSCIFTASEAWKKIQLGKMH.

At 1-26 (MPFDFRRFDIYRKVPKDLTQPTYTGA) the chain is on the cytoplasmic side. The chain crosses the membrane as a helical span at residues 27-47 (IISICCCLFILFLFLSELTGF). Topologically, residues 48-254 (ITTEVVNELY…RRQPLYRFIT (207 aa)) are lumenal. A glycan (N-linked (GlcNAc...) asparagine) is linked at asparagine 74. A helical transmembrane segment spans residues 255–275 (TICAIIGGTFTVAGILDSCIF). Topologically, residues 276 to 290 (TASEAWKKIQLGKMH) are cytoplasmic.

The protein belongs to the ERGIC family. In terms of assembly, may form a heteromeric complex composed of ERGIC1, ERGIC2 and ERGIC3. Within the complex, the interaction with ERGIC3 is direct. Interacts with ERGIC3/ERV46. N-glycosylated.

The protein resides in the endoplasmic reticulum membrane. Its subcellular location is the endoplasmic reticulum-Golgi intermediate compartment membrane. It is found in the golgi apparatus membrane. Possible role in transport between endoplasmic reticulum and Golgi. This chain is Endoplasmic reticulum-Golgi intermediate compartment protein 1 (ERGIC1), found in Homo sapiens (Human).